The chain runs to 100 residues: MRKRQVVLRRASPEEPSRSSSTASSLTVRTVRYGECQKNHAAAVGGYAVDGCREFMASRGEEGTVAALTCAACGCHRSFHRREIETEVVCDCNSPPSTGN.

Positions 1–26 (MRKRQVVLRRASPEEPSRSSSTASSL) are disordered. Residues 33-83 (YGECQKNHAAAVGGYAVDGCREFMASRGEEGTVAALTCAACGCHRSFHRRE) form a ZF-HD dimerization-type; degenerate zinc finger.

In terms of assembly, homo- and heterodimers. Interacts with ZHD1, ZHD3, ZHD5, ZHD8, ZHD10 and ZHD13. As to expression, mostly expressed in stems, flowers and siliques, and, to a lower extent, in inflorescence.

It localises to the cytoplasm. In terms of biological role, inhibits zinc finger homeodomain (ZHD) transcription factors by interacting with them to prevent both their nuclear localization and their DNA-binding properties. Involved in integrating signals from multiple hormones by regulating the expression of specific genes. The chain is Mini zinc finger protein 2 (MIF2) from Arabidopsis thaliana (Mouse-ear cress).